Reading from the N-terminus, the 493-residue chain is Probable cytosol aminopeptidase (493 aa).

Residues Lys-260 and Asp-265 each contribute to the Mn(2+) site. Lys-272 is a catalytic residue. Mn(2+)-binding residues include Asp-284, Asp-343, and Glu-345. The active site involves Arg-347.

It belongs to the peptidase M17 family. Requires Mn(2+) as cofactor.

Its subcellular location is the cytoplasm. The catalysed reaction is Release of an N-terminal amino acid, Xaa-|-Yaa-, in which Xaa is preferably Leu, but may be other amino acids including Pro although not Arg or Lys, and Yaa may be Pro. Amino acid amides and methyl esters are also readily hydrolyzed, but rates on arylamides are exceedingly low.. It catalyses the reaction Release of an N-terminal amino acid, preferentially leucine, but not glutamic or aspartic acids.. Its function is as follows. Presumably involved in the processing and regular turnover of intracellular proteins. Catalyzes the removal of unsubstituted N-terminal amino acids from various peptides. The chain is Probable cytosol aminopeptidase from Nostoc punctiforme (strain ATCC 29133 / PCC 73102).